Here is a 195-residue protein sequence, read N- to C-terminus: Obelin (195 aa).

The propeptide occupies 1–6 (MSSKYA). 4 EF-hand domains span residues 17-52 (RWIK…DICA), 53-88 (KLEA…FPQF), 110-145 (LIRE…SGIS), and 146-181 (PSQE…FWYT). Ca(2+) is bound by residues aspartate 30, asparagine 32, asparagine 34, lysine 36, and glutamate 41. Ca(2+)-binding residues include aspartate 123, aspartate 125, serine 127, threonine 129, glutamate 134, aspartate 159, aspartate 161, serine 163, aspartate 165, and glutamate 170.

It belongs to the aequorin family.

In terms of biological role, ca(2+)-dependent bioluminescence photoprotein. Displays an emission peak at 470 nm (blue light). Trace amounts of calcium ion trigger the intramolecular oxidation of the chromophore, coelenterazine into coelenteramide and CO(2) with the concomitant emission of light. The chain is Obelin from Obelia longissima (Black sea hydrozoan).